The sequence spans 725 residues: Kinesin-like protein KIF2C (725 aa).

Ala2 is modified (N-acetylalanine). Positions 2–254 (AMDSSLQARL…CHPLTMTDPI (253 aa)) are globular. Residues Ser6 and Ser22 each carry the phosphoserine modification. The segment at 89 to 116 (QKQKRRSVNSKIPAPKESLRSRSTRMST) is disordered. The residue at position 95 (Ser95) is a Phosphoserine; by AURKB. The Microtubule tip localization signal signature appears at 98 to 101 (SKIP). Residues Ser106, Ser109, Ser111, Ser115, Ser166, Ser175, Ser187, and Ser192 each carry the phosphoserine modification. Positions 207 to 238 (EKKAQNSEMRMKRAQEYDSSFPNWEFARMIKE) are negative regulator of microtubule-binding. In terms of domain architecture, Kinesin motor spans 258 to 588 (RICVCVRKRP…LRYADRVKEL (331 aa)). Residues Arg264 and 348 to 355 (GQTGSGKT) each bind ATP. The Nuclear localization signal motif lies at 415–418 (KKAK). Residues Ser519, Ser621, and Ser633 each carry the phosphoserine modification. Positions 618–658 (GNLSKEEEELSSQMSSFNEAMTQIRELEEKAMEELKEIIQQ) form a coiled coil.

It belongs to the TRAFAC class myosin-kinesin ATPase superfamily. Kinesin family. MCAK/KIF2 subfamily. Interacts with CENPH. Interacts with MTUS2/TIP150; the interaction is direct. Interacts with MAPRE1; the interaction is direct, regulated by phosphorylation and is probably required for targeting to growing microtubule plus ends. Interacts with KIF18B at microtubule tips; this interaction increases the affinity of both partners for microtubule plus ends and is required for robust microtubule depolymerization. Phosphorylation by AURKA or AURKB strongly reduces KIF18B-binding. Phosphorylation by AURKB, regulates association with centromeres and kinetochores and the microtubule depolymerization activity. In terms of processing, ubiquitinated. Expressed at high levels in thymus and testis, at low levels in small intestine, the mucosal lining of colon, and placenta, and at very low levels in spleen and ovary; expression is not detected in prostate, peripheral blood Leukocytes, heart, brain, lung, liver, skeletal muscle, kidney or pancreas. Isoform 2 is testis-specific.

The protein resides in the cytoplasm. Its subcellular location is the cytoskeleton. It is found in the nucleus. It localises to the chromosome. The protein localises to the centromere. The protein resides in the kinetochore. Functionally, in complex with KIF18B, constitutes the major microtubule plus-end depolymerizing activity in mitotic cells. Regulates the turnover of microtubules at the kinetochore and functions in chromosome segregation during mitosis. Plays a role in chromosome congression and is required for the lateral to end-on conversion of the chromosome-microtubule attachment. This Homo sapiens (Human) protein is Kinesin-like protein KIF2C (KIF2C).